A 62-amino-acid polypeptide reads, in one-letter code: Large ribosomal subunit protein eL24 (62 aa).

Zn(2+) is bound by residues cysteine 7, cysteine 10, cysteine 33, and cysteine 37. The C4-type zinc finger occupies 7-37; the sequence is CDYCGDDIEPGTGTMFVHNDGSTVHFCSAKC.

The protein belongs to the eukaryotic ribosomal protein eL24 family. Part of the 50S ribosomal subunit. Forms a cluster with proteins L3 and L14. Requires Zn(2+) as cofactor.

In terms of biological role, binds to the 23S rRNA. This Halobacterium salinarum (strain ATCC 29341 / DSM 671 / R1) protein is Large ribosomal subunit protein eL24.